A 932-amino-acid polypeptide reads, in one-letter code: Protein translocase subunit SecA, chloroplastic (932 aa).

95-102 (MRTGEGKT) serves as a coordination point for ATP. Positions 632-641 (HESRRVDNQL) are enriched in basic and acidic residues. The disordered stretch occupies residues 632–653 (HESRRVDNQLRGRSGRQGDPGS).

The protein belongs to the SecA family.

It is found in the plastid. Its subcellular location is the chloroplast stroma. It localises to the chloroplast thylakoid membrane. It catalyses the reaction ATP + H2O + chloroplast-proteinSide 1 = ADP + phosphate + chloroplast-proteinSide 2.. Has a central role in coupling the hydrolysis of ATP to the transfer of proteins across the thylakoid membrane. In Ostreococcus lucimarinus (strain CCE9901), this protein is Protein translocase subunit SecA, chloroplastic.